The sequence spans 360 residues: Protein Wnt-2 (360 aa).

A signal peptide spans 1–25 (MNAPVGGIWLWLPLLLTWLSPEVSS). 11 disulfides stabilise this stretch: cysteine 76/cysteine 87, cysteine 127/cysteine 135, cysteine 137/cysteine 157, cysteine 206/cysteine 220, cysteine 208/cysteine 215, cysteine 278/cysteine 309, cysteine 294/cysteine 304, cysteine 308/cysteine 348, cysteine 324/cysteine 339, cysteine 326/cysteine 336, and cysteine 331/cysteine 332. Serine 212 carries O-palmitoleoyl serine; by PORCN lipidation. N-linked (GlcNAc...) asparagine glycosylation occurs at asparagine 295.

It belongs to the Wnt family. In terms of processing, palmitoleoylation is required for efficient binding to frizzled receptors. Depalmitoleoylation leads to Wnt signaling pathway inhibition.

It is found in the secreted. Its subcellular location is the extracellular space. It localises to the extracellular matrix. In terms of biological role, ligand for members of the frizzled family of seven transmembrane receptors. Probable developmental protein. May be a signaling molecule which affects the development of discrete regions of tissues. Is likely to signal over only few cell diameters. The chain is Protein Wnt-2 (WNT2) from Rhinolophus ferrumequinum (Greater horseshoe bat).